The following is a 262-amino-acid chain: Ribosomal RNA small subunit methyltransferase A (262 aa).

S-adenosyl-L-methionine is bound by residues His13, Leu15, Gly40, Glu61, Asp85, and Asn103.

Belongs to the class I-like SAM-binding methyltransferase superfamily. rRNA adenine N(6)-methyltransferase family. RsmA subfamily.

Its subcellular location is the cytoplasm. The catalysed reaction is adenosine(1518)/adenosine(1519) in 16S rRNA + 4 S-adenosyl-L-methionine = N(6)-dimethyladenosine(1518)/N(6)-dimethyladenosine(1519) in 16S rRNA + 4 S-adenosyl-L-homocysteine + 4 H(+). In terms of biological role, specifically dimethylates two adjacent adenosines (A1518 and A1519) in the loop of a conserved hairpin near the 3'-end of 16S rRNA in the 30S particle. May play a critical role in biogenesis of 30S subunits. The chain is Ribosomal RNA small subunit methyltransferase A from Bordetella avium (strain 197N).